Here is a 193-residue protein sequence, read N- to C-terminus: UMP-CMP kinase (193 aa).

Residue 13-18 participates in ATP binding; that stretch reads GAGKGT. Residues 33-63 form an NMP region; sequence SAGDLLRDERKKPDSQYGELIESYIRDGKIV. Residues R39, 61-63, and 93-96 contribute to the a ribonucleoside 5'-phosphate site; these read KIV and GFPR. N100 provides a ligand contact to CMP. Positions 133 to 143 are LID; that stretch reads ERGKSSGRSDD. R134 lines the ATP pocket. R140 and R151 together coordinate a ribonucleoside 5'-phosphate. ATP is bound at residue K179.

Belongs to the adenylate kinase family. UMP-CMP kinase subfamily. As to quaternary structure, monomer. It depends on Mg(2+) as a cofactor.

It is found in the nucleus. The protein localises to the cytoplasm. It carries out the reaction CMP + ATP = CDP + ADP. The enzyme catalyses dCMP + ATP = dCDP + ADP. The catalysed reaction is UMP + ATP = UDP + ADP. It catalyses the reaction a 2'-deoxyribonucleoside 5'-diphosphate + ATP = a 2'-deoxyribonucleoside 5'-triphosphate + ADP. It carries out the reaction a ribonucleoside 5'-diphosphate + ATP = a ribonucleoside 5'-triphosphate + ADP. In terms of biological role, catalyzes the phosphorylation of pyrimidine nucleoside monophosphates at the expense of ATP. Plays an important role in de novo pyrimidine nucleotide biosynthesis. Has preference for UMP and CMP as phosphate acceptors. Also displays broad nucleoside diphosphate kinase activity. In Xenopus laevis (African clawed frog), this protein is UMP-CMP kinase (cmpk1).